Here is a 124-residue protein sequence, read N- to C-terminus: Large ribosomal subunit protein bL17 (124 aa).

This sequence belongs to the bacterial ribosomal protein bL17 family. Part of the 50S ribosomal subunit. Contacts protein L32.

This Borrelia turicatae (strain 91E135) protein is Large ribosomal subunit protein bL17.